A 126-amino-acid polypeptide reads, in one-letter code: Small ribosomal subunit protein uS12 (126 aa).

3-methylthioaspartic acid is present on Asp-89. The tract at residues 99–126 (RGSLDTSGVNDRKQGRSKYGTKKPKDKK) is disordered. The segment covering 113-126 (GRSKYGTKKPKDKK) has biased composition (basic residues).

The protein belongs to the universal ribosomal protein uS12 family. As to quaternary structure, part of the 30S ribosomal subunit. Contacts proteins S8 and S17. May interact with IF1 in the 30S initiation complex.

Functionally, with S4 and S5 plays an important role in translational accuracy. Interacts with and stabilizes bases of the 16S rRNA that are involved in tRNA selection in the A site and with the mRNA backbone. Located at the interface of the 30S and 50S subunits, it traverses the body of the 30S subunit contacting proteins on the other side and probably holding the rRNA structure together. The combined cluster of proteins S8, S12 and S17 appears to hold together the shoulder and platform of the 30S subunit. The chain is Small ribosomal subunit protein uS12 from Legionella pneumophila (strain Paris).